The sequence spans 808 residues: Phospholipase D alpha 1 (808 aa).

In terms of domain architecture, C2 spans 1–125 (MSKVLLHGTL…LDGDEVDKWI (125 aa)). Ca(2+) is bound at residue Asp186. In terms of domain architecture, PLD phosphodiesterase 1 spans 326–364 (TMFTHHQKIVVVDHELPRGGSQKRRVMSFVGGIDLCDGR). Catalysis depends on residues His331, Lys333, and Asp338. Residue His331 coordinates a 1,2-diacyl-sn-glycero-3-phosphate. Residues His370 and His404 each contribute to the Ca(2+) site. 2 residues coordinate a 1,2-diacyl-sn-glycero-3-phosphate: Gln520 and His659. The PLD phosphodiesterase 2 domain maps to 654-681 (FMIYVHSKMMIVDDEYIIVGSANINQRS). Catalysis depends on residues His659, Lys661, and Asp666. Glu720 serves as a coordination point for Ca(2+).

Belongs to the phospholipase D family. C2-PLD subfamily. Interacts (via C2 domain) with CARDA (via RGD or KGE motifs). Requires Ca(2+) as cofactor.

It carries out the reaction a 1,2-diacyl-sn-glycero-3-phosphocholine + H2O = a 1,2-diacyl-sn-glycero-3-phosphate + choline + H(+). Functionally, hydrolyzes glycerol-phospholipids at the terminal phosphodiesteric bond. Plays an important role in various cellular processes. In Cynara cardunculus (Cardoon), this protein is Phospholipase D alpha 1.